The following is a 171-amino-acid chain: Protein-export protein SecB (171 aa).

The protein belongs to the SecB family. Homotetramer, a dimer of dimers. One homotetramer interacts with 1 SecA dimer.

It localises to the cytoplasm. Its function is as follows. One of the proteins required for the normal export of preproteins out of the cell cytoplasm. It is a molecular chaperone that binds to a subset of precursor proteins, maintaining them in a translocation-competent state. It also specifically binds to its receptor SecA. This is Protein-export protein SecB from Histophilus somni (strain 129Pt) (Haemophilus somnus).